A 368-amino-acid chain; its full sequence is 3-dehydroquinate synthase (368 aa).

NAD(+) is bound by residues aspartate 69–lysine 74, glycine 103–aspartate 107, threonine 127–threonine 128, lysine 140, and lysine 149. Zn(2+)-binding residues include glutamate 182, histidine 245, and histidine 262.

It belongs to the sugar phosphate cyclases superfamily. Dehydroquinate synthase family. Co(2+) is required as a cofactor. Requires Zn(2+) as cofactor. It depends on NAD(+) as a cofactor.

It localises to the cytoplasm. The catalysed reaction is 7-phospho-2-dehydro-3-deoxy-D-arabino-heptonate = 3-dehydroquinate + phosphate. Its pathway is metabolic intermediate biosynthesis; chorismate biosynthesis; chorismate from D-erythrose 4-phosphate and phosphoenolpyruvate: step 2/7. In terms of biological role, catalyzes the conversion of 3-deoxy-D-arabino-heptulosonate 7-phosphate (DAHP) to dehydroquinate (DHQ). The polypeptide is 3-dehydroquinate synthase (Pseudomonas paraeruginosa (strain DSM 24068 / PA7) (Pseudomonas aeruginosa (strain PA7))).